The primary structure comprises 226 residues: V-type proton ATPase subunit E (226 aa).

The protein belongs to the V-ATPase E subunit family. In terms of assembly, V-ATPase is a heteromultimeric enzyme composed of a peripheral catalytic V1 complex (components A to H) attached to an integral membrane V0 proton pore complex (components: a, c, c', c'' and d).

In terms of biological role, subunit of the peripheral V1 complex of vacuolar ATPase essential for assembly or catalytic function. V-ATPase is responsible for acidifying a variety of intracellular compartments in eukaryotic cells. The chain is V-type proton ATPase subunit E (VATE) from Mesembryanthemum crystallinum (Common ice plant).